The following is a 119-amino-acid chain: UPF0102 protein Nther_1376 (119 aa).

Belongs to the UPF0102 family.

This chain is UPF0102 protein Nther_1376, found in Natranaerobius thermophilus (strain ATCC BAA-1301 / DSM 18059 / JW/NM-WN-LF).